Reading from the N-terminus, the 292-residue chain is Bifunctional protein FolD (292 aa).

Residues 165 to 167, serine 190, and threonine 231 contribute to the NADP(+) site; that span reads GRS.

Belongs to the tetrahydrofolate dehydrogenase/cyclohydrolase family. As to quaternary structure, homodimer.

It catalyses the reaction (6R)-5,10-methylene-5,6,7,8-tetrahydrofolate + NADP(+) = (6R)-5,10-methenyltetrahydrofolate + NADPH. The catalysed reaction is (6R)-5,10-methenyltetrahydrofolate + H2O = (6R)-10-formyltetrahydrofolate + H(+). Its pathway is one-carbon metabolism; tetrahydrofolate interconversion. Its function is as follows. Catalyzes the oxidation of 5,10-methylenetetrahydrofolate to 5,10-methenyltetrahydrofolate and then the hydrolysis of 5,10-methenyltetrahydrofolate to 10-formyltetrahydrofolate. This is Bifunctional protein FolD from Arthrobacter globiformis.